We begin with the raw amino-acid sequence, 277 residues long: Sulfur carrier protein FdhD (277 aa).

The active-site Cysteine persulfide intermediate is the C121. F260–R265 provides a ligand contact to Mo-bis(molybdopterin guanine dinucleotide).

It belongs to the FdhD family.

The protein resides in the cytoplasm. Functionally, required for formate dehydrogenase (FDH) activity. Acts as a sulfur carrier protein that transfers sulfur from IscS to the molybdenum cofactor prior to its insertion into FDH. This is Sulfur carrier protein FdhD from Escherichia coli O6:K15:H31 (strain 536 / UPEC).